The following is a 349-amino-acid chain: ATP phosphoribosyltransferase regulatory subunit (349 aa).

The tract at residues 327–349 (GRGRGVRPRRASARGGRARARPR) is disordered. A compositionally biased stretch (basic residues) spans 330 to 349 (RGVRPRRASARGGRARARPR).

Belongs to the class-II aminoacyl-tRNA synthetase family. HisZ subfamily. In terms of assembly, heteromultimer composed of HisG and HisZ subunits.

Its subcellular location is the cytoplasm. It participates in amino-acid biosynthesis; L-histidine biosynthesis; L-histidine from 5-phospho-alpha-D-ribose 1-diphosphate: step 1/9. Functionally, required for the first step of histidine biosynthesis. May allow the feedback regulation of ATP phosphoribosyltransferase activity by histidine. The sequence is that of ATP phosphoribosyltransferase regulatory subunit from Anaeromyxobacter sp. (strain K).